The sequence spans 375 residues: Putative glutamate--cysteine ligase 2 (375 aa).

This sequence belongs to the glutamate--cysteine ligase type 2 family. YbdK subfamily.

The catalysed reaction is L-cysteine + L-glutamate + ATP = gamma-L-glutamyl-L-cysteine + ADP + phosphate + H(+). Functionally, ATP-dependent carboxylate-amine ligase which exhibits weak glutamate--cysteine ligase activity. The polypeptide is Putative glutamate--cysteine ligase 2 (Sorangium cellulosum (strain So ce56) (Polyangium cellulosum (strain So ce56))).